Reading from the N-terminus, the 165-residue chain is 6,7-dimethyl-8-ribityllumazine synthase 2 (165 aa).

5-amino-6-(D-ribitylamino)uracil contacts are provided by residues tryptophan 24, 56–58 (SFE), and 80–82 (LVV). The active-site Proton donor is arginine 88. Serine 113 contributes to the 5-amino-6-(D-ribitylamino)uracil binding site. (2S)-2-hydroxy-3-oxobutyl phosphate is bound at residue histidine 127.

The protein belongs to the DMRL synthase family.

The enzyme catalyses (2S)-2-hydroxy-3-oxobutyl phosphate + 5-amino-6-(D-ribitylamino)uracil = 6,7-dimethyl-8-(1-D-ribityl)lumazine + phosphate + 2 H2O + H(+). It functions in the pathway cofactor biosynthesis; riboflavin biosynthesis; riboflavin from 2-hydroxy-3-oxobutyl phosphate and 5-amino-6-(D-ribitylamino)uracil: step 1/2. Catalyzes the formation of 6,7-dimethyl-8-ribityllumazine by condensation of 5-amino-6-(D-ribitylamino)uracil with 3,4-dihydroxy-2-butanone 4-phosphate. This is the penultimate step in the biosynthesis of riboflavin. The polypeptide is 6,7-dimethyl-8-ribityllumazine synthase 2 (Bradyrhizobium diazoefficiens (strain JCM 10833 / BCRC 13528 / IAM 13628 / NBRC 14792 / USDA 110)).